A 690-amino-acid chain; its full sequence is Glycine--tRNA ligase 1, mitochondrial (690 aa).

The transit peptide at 1–24 (MSFFNISRRFYSQIVKKSVKIKRM) directs the protein to the mitochondrion. The residue at position 25 (S25) is an N-acetylserine. S226 carries the post-translational modification Phosphoserine. E251 contributes to the glycine binding site. ATP is bound by residues 283–285 (RNE) and 294–295 (RV). E302 provides a ligand contact to glycine. Position 410–411 (410–411 (EC)) interacts with ATP. Phosphoserine occurs at positions 476 and 528. 531–533 (EPS) contributes to the glycine binding site. R538 contacts ATP. Phosphothreonine is present on T689.

This sequence belongs to the class-II aminoacyl-tRNA synthetase family. In terms of assembly, homodimer.

It localises to the cytoplasm. The protein resides in the mitochondrion matrix. It carries out the reaction tRNA(Gly) + glycine + ATP = glycyl-tRNA(Gly) + AMP + diphosphate. It catalyses the reaction 2 ATP + H(+) = P(1),P(4)-bis(5'-adenosyl) tetraphosphate + diphosphate. Catalyzes the ATP-dependent ligation of glycine to the 3'-end of its cognate tRNA, via the formation of an aminoacyl-adenylate intermediate (Gly-AMP). Also produces diadenosine tetraphosphate (Ap4A), a universal pleiotropic signaling molecule needed for cell regulation pathways, by direct condensation of 2 ATPs. Thereby, may play a special role in Ap4A homeostasis. This is Glycine--tRNA ligase 1, mitochondrial (GRS1) from Saccharomyces cerevisiae (strain ATCC 204508 / S288c) (Baker's yeast).